Reading from the N-terminus, the 335-residue chain is DNA polymerase beta (335 aa).

Lys-41 is covalently cross-linked (Glycyl lysine isopeptide (Lys-Gly) (interchain with G-Cter in ubiquitin)). Lys-60 contributes to the K(+) binding site. Lys-60 lines the Na(+) pocket. Residue Lys-61 forms a Glycyl lysine isopeptide (Lys-Gly) (interchain with G-Cter in ubiquitin) linkage. K(+) is bound by residues Leu-62 and Val-65. The Na(+) site is built by Leu-62 and Val-65. Catalysis depends on Lys-72, which acts as the Nucleophile; Schiff-base intermediate with DNA; for 5'-dRP lyase activity. Residue Lys-72 is modified to N6-acetyllysine. Residue Lys-81 forms a Glycyl lysine isopeptide (Lys-Gly) (interchain with G-Cter in ubiquitin) linkage. Arg-83 carries the omega-N-methylarginine; by PRMT6 modification. The K(+) site is built by Thr-101, Val-103, and Ile-106. Na(+) is bound by residues Thr-101, Val-103, and Ile-106. Arg-149 contributes to the a 2'-deoxyribonucleoside 5'-triphosphate binding site. Arg-152 carries the omega-N-methylarginine; by PRMT6 modification. A 2'-deoxyribonucleoside 5'-triphosphate-binding residues include Ser-180, Arg-183, Gly-189, and Asp-190. The segment at 183-192 (RGAESSGDMD) is DNA-binding. Positions 190, 192, and 256 each coordinate Mg(2+).

The protein belongs to the DNA polymerase type-X family. Monomer. Binds single-stranded DNA (ssDNA). Interacts with APEX1, LIG1, LIG3, FEN1, PCNA and XRCC1. Interacts with HUWE1/ARF-BP1, STUB1/CHIP and USP47. Interacts with FAM168A. Mg(2+) is required as a cofactor. In terms of processing, methylation by PRMT6 stimulates the polymerase activity by enhancing DNA binding and processivity. Ubiquitinated at Lys-41, Lys-61 and Lys-81: monoubiquitinated by HUWE1/ARF-BP1. Monoubiquitinated protein is then the target of STUB1/CHIP, which catalyzes polyubiquitination from monoubiquitin, leading to degradation by the proteasome. USP47 mediates the deubiquitination of monoubiquitinated protein, preventing polyubiquitination by STUB1/CHIP and its subsequent degradation.

Its subcellular location is the nucleus. It is found in the cytoplasm. The catalysed reaction is DNA(n) + a 2'-deoxyribonucleoside 5'-triphosphate = DNA(n+1) + diphosphate. It catalyses the reaction a 5'-end 2'-deoxyribose-2'-deoxyribonucleotide-DNA = (2E,4S)-4-hydroxypenten-2-al-5-phosphate + a 5'-end 5'-phospho-2'-deoxyribonucleoside-DNA + H(+). It carries out the reaction 2'-deoxyribonucleotide-(2'-deoxyribose 5'-phosphate)-2'-deoxyribonucleotide-DNA = a 3'-end 2'-deoxyribonucleotide-(2,3-dehydro-2,3-deoxyribose 5'-phosphate)-DNA + a 5'-end 5'-phospho-2'-deoxyribonucleoside-DNA + H(+). Functionally, repair polymerase that plays a key role in base-excision repair. During this process, the damaged base is excised by specific DNA glycosylases, the DNA backbone is nicked at the abasic site by an apurinic/apyrimidic (AP) endonuclease, and POLB removes 5'-deoxyribose-phosphate from the preincised AP site acting as a 5'-deoxyribose-phosphate lyase (5'-dRP lyase); through its DNA polymerase activity, it adds one nucleotide to the 3' end of the arising single-nucleotide gap. Conducts 'gap-filling' DNA synthesis in a stepwise distributive fashion rather than in a processive fashion as for other DNA polymerases. It is also able to cleave sugar-phosphate bonds 3' to an intact AP site, acting as an AP lyase. This Rattus norvegicus (Rat) protein is DNA polymerase beta (Polb).